A 124-amino-acid chain; its full sequence is MKVLILVLLGVVILQAAPIRKVENLLPTRNPPQNELVYWCTYANQCDFCWECIHGICRNRIQADWPVIHQNDWIINCTVSRWNGQCHYYEGSQQYLHHEMDCINPTSHTYPHTEYMKIYERDDL.

The N-terminal stretch at 1–16 (MKVLILVLLGVVILQA) is a signal peptide. An N-linked (GlcNAc...) asparagine; by host glycan is attached at asparagine 76.

Belongs to the asfivirus MGF 110 family.

Its function is as follows. Plays a role in virus cell tropism, and may be required for efficient virus replication in macrophages. In African swine fever virus (isolate Warthog/Namibia/Wart80/1980) (ASFV), this protein is Protein MGF 110-8L.